The following is a 210-amino-acid chain: 7-carboxy-7-deazaguanine synthase (210 aa).

Substrate contacts are provided by residues 12–14 (LQG) and arginine 27. The 193-residue stretch at 18–210 (NAGRPAVFCR…MQTHKYLNIP (193 aa)) folds into the Radical SAM core domain. [4Fe-4S] cluster is bound by residues cysteine 31, cysteine 46, and cysteine 49. 48-50 (FCD) contacts S-adenosyl-L-methionine. Threonine 51 provides a ligand contact to Mg(2+). Threonine 90 is a substrate binding site. S-adenosyl-L-methionine-binding positions include glycine 92, 133–135 (SPK), and 173–176 (QPMD). Proline 210 serves as a coordination point for substrate.

It belongs to the radical SAM superfamily. 7-carboxy-7-deazaguanine synthase family. Homodimer. It depends on [4Fe-4S] cluster as a cofactor. The cofactor is S-adenosyl-L-methionine. Mg(2+) serves as cofactor.

It catalyses the reaction 6-carboxy-5,6,7,8-tetrahydropterin + H(+) = 7-carboxy-7-deazaguanine + NH4(+). The protein operates within purine metabolism; 7-cyano-7-deazaguanine biosynthesis. Its function is as follows. Catalyzes the complex heterocyclic radical-mediated conversion of 6-carboxy-5,6,7,8-tetrahydropterin (CPH4) to 7-carboxy-7-deazaguanine (CDG), a step common to the biosynthetic pathways of all 7-deazapurine-containing compounds. The chain is 7-carboxy-7-deazaguanine synthase from Burkholderia multivorans (strain ATCC 17616 / 249).